Consider the following 236-residue polypeptide: ATP-dependent dethiobiotin synthetase BioD (236 aa).

Position 19 (threonine 19) interacts with Mg(2+). The active site involves lysine 40. Mg(2+)-binding residues include aspartate 61 and glutamate 122. Residues aspartate 61, 122-125 (EGVG), 182-183 (NT), and 211-213 (PRL) contribute to the ATP site.

It belongs to the dethiobiotin synthetase family. In terms of assembly, homodimer. The cofactor is Mg(2+).

It localises to the cytoplasm. The catalysed reaction is (7R,8S)-7,8-diammoniononanoate + CO2 + ATP = (4R,5S)-dethiobiotin + ADP + phosphate + 3 H(+). It participates in cofactor biosynthesis; biotin biosynthesis; biotin from 7,8-diaminononanoate: step 1/2. Catalyzes a mechanistically unusual reaction, the ATP-dependent insertion of CO2 between the N7 and N8 nitrogen atoms of 7,8-diaminopelargonic acid (DAPA, also called 7,8-diammoniononanoate) to form a ureido ring. In Janthinobacterium sp. (strain Marseille) (Minibacterium massiliensis), this protein is ATP-dependent dethiobiotin synthetase BioD.